The following is a 398-amino-acid chain: Signal-regulatory protein beta-1 isoform 3 (398 aa).

An N-terminal signal peptide occupies residues 1–29 (MPVPASWPHLPSPFLLMTLLLGRLTGVAG). Residues 30 to 371 (EEELQVIQPD…GPALASAAPL (342 aa)) lie on the Extracellular side of the membrane. The Ig-like V-type domain occupies 31–136 (EELQVIQPDK…SPDHVEFKSG (106 aa)). Cystine bridges form between Cys54-Cys120 and Cys169-Cys227. Ig-like C1-type domains lie at 147 to 246 (PSAP…ANLS) and 253 to 347 (PTLE…HDLK). Asn244, Asn291, and Asn318 each carry an N-linked (GlcNAc...) asparagine glycan. Cys272 and Cys330 are joined by a disulfide. Residues 337-354 (QPAVSKSHDLKVSAHPKE) are compositionally biased toward basic and acidic residues. A disordered region spans residues 337 to 361 (QPAVSKSHDLKVSAHPKEQGSNTAP). A helical membrane pass occupies residues 372 to 392 (LIAFLLGPKVLLVVGVSVIYV). At 393–398 (YWKQKA) the chain is on the cytoplasmic side.

Its subcellular location is the membrane. Its function is as follows. Immunoglobulin-like cell surface receptor involved in the negative regulation of receptor tyrosine kinase-coupled signaling processes. The protein is Signal-regulatory protein beta-1 isoform 3 (SIRPB1) of Homo sapiens (Human).